We begin with the raw amino-acid sequence, 292 residues long: Histamine N-methyltransferase (292 aa).

Glu-28 is a binding site for substrate. Gly-60, Glu-89, Gln-94, Ser-120, and Ile-142 together coordinate S-adenosyl-L-methionine. Asn-283 contributes to the substrate binding site.

The protein belongs to the class I-like SAM-binding methyltransferase superfamily. HNMT family. As to quaternary structure, monomer. Expressed in jejunum, brain &gt; lung, spleen, stomach &gt; liver, kidney.

Its subcellular location is the cytoplasm. It catalyses the reaction histamine + S-adenosyl-L-methionine = N(tau)-methylhistamine + S-adenosyl-L-homocysteine + H(+). In terms of biological role, inactivates histamine by N-methylation. Plays an important role in degrading histamine and in regulating the airway response to histamine. This chain is Histamine N-methyltransferase (HNMT), found in Cavia porcellus (Guinea pig).